Consider the following 177-residue polypeptide: Co-chaperone protein HscB homolog (177 aa).

Residues 8-80 (DFFALFGLPR…LPRAQYMLEL (73 aa)) enclose the J domain.

This sequence belongs to the HscB family. As to quaternary structure, interacts with HscA and stimulates its ATPase activity.

Functionally, co-chaperone involved in the maturation of iron-sulfur cluster-containing proteins. Seems to help targeting proteins to be folded toward HscA. The chain is Co-chaperone protein HscB homolog from Aromatoleum aromaticum (strain DSM 19018 / LMG 30748 / EbN1) (Azoarcus sp. (strain EbN1)).